A 493-amino-acid chain; its full sequence is Monodehydroascorbate reductase, chloroplastic/mitochondrial (493 aa).

The transit peptide at Met-1 to Leu-51 directs the protein to the chloroplast and mitochondrion. FAD-binding positions include Gly-68 to Ala-71, Glu-95, Arg-102, Lys-107, and Arg-201 to Glu-202. NAD(+)-binding positions include Gly-224–Glu-230, Glu-248, Arg-254, and Gly-313. Tyr-226–Glu-230 contacts NADP(+). Positions 254 and 313 each coordinate NADP(+). Asp-351 is an FAD binding site. Glu-367 to His-368 contacts NAD(+). Glu-367–His-368 is a binding site for NADP(+). An FAD-binding site is contributed by Val-369. Arg-373 lines the L-ascorbate pocket. Tyr-398 lines the FAD pocket. Tyr-398 is a binding site for NAD(+). Residue Tyr-398 participates in NADP(+) binding. Position 400 (Arg-400) interacts with L-ascorbate.

It belongs to the FAD-dependent oxidoreductase family. As to quaternary structure, interacts in vitro with TRXy. It depends on FAD as a cofactor.

Its subcellular location is the plastid. It localises to the chloroplast. The protein resides in the mitochondrion. The catalysed reaction is 2 monodehydro-L-ascorbate radical + NADH + H(+) = 2 L-ascorbate + NAD(+). It catalyses the reaction 2,4,6-trinitrotoluene + NADH = 2,4,6-trinitrotoluene radical + e(-) + NAD(+). With respect to regulation, redox regulation of the activity by thioredoxin TRXy1. Functionally, catalyzes the conversion of monodehydroascorbate (MDA) to ascorbate, oxidizing NADH in the process. Mediates phytotoxicity of 2,4,6-trinitrotoluene (TNT), an explosive and environmental pollutant, by reducing TNT and forming a nitro radical that spontaneously reacts with atmospheric oxygen, generating reactive superoxide. Can also use 1-chloro-2,4-dinitrobenzene (CDNB) as substrate, but not 1-chloro-4-nitrobenzene (CNB). This Arabidopsis thaliana (Mouse-ear cress) protein is Monodehydroascorbate reductase, chloroplastic/mitochondrial.